Here is a 60-residue protein sequence, read N- to C-terminus: Short neurotoxin 1 (60 aa).

Intrachain disulfides connect cysteine 3–cysteine 22, cysteine 17–cysteine 39, cysteine 41–cysteine 52, and cysteine 53–cysteine 58.

It belongs to the three-finger toxin family. Short-chain subfamily. Type I alpha-neurotoxin sub-subfamily. Expressed by the venom gland.

The protein localises to the secreted. Its function is as follows. Binds to muscle nicotinic acetylcholine receptor (nAChR) and inhibit acetylcholine from binding to the receptor, thereby impairing neuromuscular transmission. The recombinant protein also barely blocks voltage-gated potassium channel Kv1.3/KCNA3 (2.71% inhibition at 60 nM of toxin). The sequence is that of Short neurotoxin 1 from Hydrophis lapemoides (Persian gulf sea snake).